Here is a 293-residue protein sequence, read N- to C-terminus: 4-hydroxy-tetrahydrodipicolinate synthase (293 aa).

T45 contacts pyruvate. The Proton donor/acceptor role is filled by Y133. K161 acts as the Schiff-base intermediate with substrate in catalysis. A pyruvate-binding site is contributed by I204.

This sequence belongs to the DapA family. As to quaternary structure, homotetramer; dimer of dimers.

The protein localises to the cytoplasm. It catalyses the reaction L-aspartate 4-semialdehyde + pyruvate = (2S,4S)-4-hydroxy-2,3,4,5-tetrahydrodipicolinate + H2O + H(+). The protein operates within amino-acid biosynthesis; L-lysine biosynthesis via DAP pathway; (S)-tetrahydrodipicolinate from L-aspartate: step 3/4. In terms of biological role, catalyzes the condensation of (S)-aspartate-beta-semialdehyde [(S)-ASA] and pyruvate to 4-hydroxy-tetrahydrodipicolinate (HTPA). The protein is 4-hydroxy-tetrahydrodipicolinate synthase of Yersinia pseudotuberculosis serotype O:1b (strain IP 31758).